A 107-amino-acid polypeptide reads, in one-letter code: L-rhamnose mutarotase (107 aa).

Residue Y18 coordinates substrate. The active-site Proton donor is the H22. Substrate contacts are provided by residues Y41 and 76-77 (WW).

The protein belongs to the rhamnose mutarotase family. Homodimer.

The protein localises to the cytoplasm. It catalyses the reaction alpha-L-rhamnose = beta-L-rhamnose. It participates in carbohydrate metabolism; L-rhamnose metabolism. Functionally, involved in the anomeric conversion of L-rhamnose. The sequence is that of L-rhamnose mutarotase from Paraburkholderia phytofirmans (strain DSM 17436 / LMG 22146 / PsJN) (Burkholderia phytofirmans).